Consider the following 330-residue polypeptide: Ketol-acid reductoisomerase (NADP(+)) (330 aa).

The 181-residue stretch at 1–181 (MNIYYEQDAD…GGTKAGVIET (181 aa)) folds into the KARI N-terminal Rossmann domain. NADP(+) is bound by residues 24 to 27 (YGSQ), lysine 47, serine 50, serine 52, and 82 to 85 (DQTQ). Residue histidine 107 is part of the active site. Glycine 133 is a binding site for NADP(+). Residues 182-327 (SFKDETETDL…AKLRGMMSWL (146 aa)) form the KARI C-terminal knotted domain. Aspartate 190, glutamate 194, glutamate 226, and glutamate 230 together coordinate Mg(2+). Serine 251 is a binding site for substrate.

Belongs to the ketol-acid reductoisomerase family. The cofactor is Mg(2+).

It carries out the reaction (2R)-2,3-dihydroxy-3-methylbutanoate + NADP(+) = (2S)-2-acetolactate + NADPH + H(+). The catalysed reaction is (2R,3R)-2,3-dihydroxy-3-methylpentanoate + NADP(+) = (S)-2-ethyl-2-hydroxy-3-oxobutanoate + NADPH + H(+). Its pathway is amino-acid biosynthesis; L-isoleucine biosynthesis; L-isoleucine from 2-oxobutanoate: step 2/4. The protein operates within amino-acid biosynthesis; L-valine biosynthesis; L-valine from pyruvate: step 2/4. Functionally, involved in the biosynthesis of branched-chain amino acids (BCAA). Catalyzes an alkyl-migration followed by a ketol-acid reduction of (S)-2-acetolactate (S2AL) to yield (R)-2,3-dihydroxy-isovalerate. In the isomerase reaction, S2AL is rearranged via a Mg-dependent methyl migration to produce 3-hydroxy-3-methyl-2-ketobutyrate (HMKB). In the reductase reaction, this 2-ketoacid undergoes a metal-dependent reduction by NADPH to yield (R)-2,3-dihydroxy-isovalerate. This Chlorobaculum tepidum (strain ATCC 49652 / DSM 12025 / NBRC 103806 / TLS) (Chlorobium tepidum) protein is Ketol-acid reductoisomerase (NADP(+)).